Reading from the N-terminus, the 223-residue chain is MTINYANYIDHTLLAMDATEEQIIKLCEEAKQHHFYAVCVNSGYVPVAAQQLAGTSVKVCSVIGFPLGAGLTEAKAFEAQAAIKAGAQEIDMVINVGWLKSGKIAEVKADIKAVRDNCASTPLKVILETCLLSDAQIVQVCEMCRELDVAFVKTSTGFSTGGAKEEHVKLMRATVGQDMGVKASGAVRDRATAETMIKAGATRIGTSSGVAIVSGQQASASSY.

Asp-91 functions as the Proton donor/acceptor in the catalytic mechanism. The active-site Schiff-base intermediate with acetaldehyde is the Lys-153. Lys-182 functions as the Proton donor/acceptor in the catalytic mechanism.

The protein belongs to the DeoC/FbaB aldolase family. DeoC type 1 subfamily.

The protein resides in the cytoplasm. It catalyses the reaction 2-deoxy-D-ribose 5-phosphate = D-glyceraldehyde 3-phosphate + acetaldehyde. It participates in carbohydrate degradation; 2-deoxy-D-ribose 1-phosphate degradation; D-glyceraldehyde 3-phosphate and acetaldehyde from 2-deoxy-alpha-D-ribose 1-phosphate: step 2/2. Its function is as follows. Catalyzes a reversible aldol reaction between acetaldehyde and D-glyceraldehyde 3-phosphate to generate 2-deoxy-D-ribose 5-phosphate. The sequence is that of Deoxyribose-phosphate aldolase from Yersinia enterocolitica serotype O:8 / biotype 1B (strain NCTC 13174 / 8081).